The sequence spans 159 residues: 6,7-dimethyl-8-ribityllumazine synthase (159 aa).

5-amino-6-(D-ribitylamino)uracil-binding positions include F22, 57–59, and 81–83; these read AVE and AVI. 86–87 serves as a coordination point for (2S)-2-hydroxy-3-oxobutyl phosphate; that stretch reads GT. The active-site Proton donor is H89. F114 is a 5-amino-6-(D-ribitylamino)uracil binding site. R128 is a (2S)-2-hydroxy-3-oxobutyl phosphate binding site.

Belongs to the DMRL synthase family. As to quaternary structure, forms an icosahedral capsid composed of 60 subunits, arranged as a dodecamer of pentamers.

The catalysed reaction is (2S)-2-hydroxy-3-oxobutyl phosphate + 5-amino-6-(D-ribitylamino)uracil = 6,7-dimethyl-8-(1-D-ribityl)lumazine + phosphate + 2 H2O + H(+). Its pathway is cofactor biosynthesis; riboflavin biosynthesis; riboflavin from 2-hydroxy-3-oxobutyl phosphate and 5-amino-6-(D-ribitylamino)uracil: step 1/2. In terms of biological role, catalyzes the formation of 6,7-dimethyl-8-ribityllumazine by condensation of 5-amino-6-(D-ribitylamino)uracil with 3,4-dihydroxy-2-butanone 4-phosphate. This is the penultimate step in the biosynthesis of riboflavin. In Shewanella baltica (strain OS155 / ATCC BAA-1091), this protein is 6,7-dimethyl-8-ribityllumazine synthase.